Here is a 143-residue protein sequence, read N- to C-terminus: MIRKSKKITKMRGSRTCGYGEAKKHRGAGHRGGRGNAGHQKHKWLSVCKFNPDYFGKYGFNRNPCLIKQLETINIGELEEYILKYKDAFQVEDGKVVVDATTIGYEKVLGKGRISTAMVVKAVEFSEGAKEKIEAAGGEFVEL.

Basic residues-rich tracts occupy residues 1 to 13 (MIRK…KMRG) and 23 to 38 (KKHR…GNAG). The segment at 1–38 (MIRKSKKITKMRGSRTCGYGEAKKHRGAGHRGGRGNAG) is disordered.

This sequence belongs to the universal ribosomal protein uL15 family. As to quaternary structure, part of the 50S ribosomal subunit.

Functionally, binds to the 23S rRNA. This chain is Large ribosomal subunit protein uL15, found in Methanococcus maripaludis (strain C5 / ATCC BAA-1333).